The following is a 532-amino-acid chain: Chaperonin GroEL 2 (532 aa).

Residues 30–33, Lys-51, 87–91, Gly-415, 479–481, and Asp-495 each bind ATP; these read TLGP, DGTTT, and NAA.

This sequence belongs to the chaperonin (HSP60) family. As to quaternary structure, forms a cylinder of 14 subunits composed of two heptameric rings stacked back-to-back. Interacts with the co-chaperonin GroES.

Its subcellular location is the cytoplasm. It catalyses the reaction ATP + H2O + a folded polypeptide = ADP + phosphate + an unfolded polypeptide.. Its function is as follows. Together with its co-chaperonin GroES, plays an essential role in assisting protein folding. The GroEL-GroES system forms a nano-cage that allows encapsulation of the non-native substrate proteins and provides a physical environment optimized to promote and accelerate protein folding. This chain is Chaperonin GroEL 2, found in Vibrio parahaemolyticus serotype O3:K6 (strain RIMD 2210633).